We begin with the raw amino-acid sequence, 202 residues long: MASSLALKRFLSSGLLSSSFLRPVASSASRSFNTNAMRQYDQHSDDRNVDVYRHSFPRTRRDDLLLSDVFDPFSPPRSLSQVLNMVDLLTDNPVLSAASRRGWDARETEDALFLRLDMPGLGKEDVKISVEQNTLTIKGEEGAKESEEKEKSGRRFSSRIDLPEKLYKIDVIKAEMKNGVLKVTVPKMKEEERNNVINVKVD.

The N-terminal 31 residues, 1 to 31, are a transit peptide targeting the mitochondrion; that stretch reads MASSLALKRFLSSGLLSSSFLRPVASSASRS. In terms of domain architecture, sHSP spans 94 to 202; the sequence is VLSAASRRGW…RNNVINVKVD (109 aa).

The protein belongs to the small heat shock protein (HSP20) family.

It is found in the mitochondrion. The protein is Heat shock 22 kDa protein, mitochondrial (HSP22) of Pisum sativum (Garden pea).